Reading from the N-terminus, the 332-residue chain is Small ribosomal subunit protein uS2 (332 aa).

It belongs to the universal ribosomal protein uS2 family.

This is Small ribosomal subunit protein uS2 from Afipia carboxidovorans (strain ATCC 49405 / DSM 1227 / KCTC 32145 / OM5) (Oligotropha carboxidovorans).